A 251-amino-acid polypeptide reads, in one-letter code: DNA repair protein RecO (251 aa).

This sequence belongs to the RecO family.

In terms of biological role, involved in DNA repair and RecF pathway recombination. The chain is DNA repair protein RecO from Albidiferax ferrireducens (strain ATCC BAA-621 / DSM 15236 / T118) (Rhodoferax ferrireducens).